Consider the following 229-residue polypeptide: Thiamine-phosphate synthase (229 aa).

4-amino-2-methyl-5-(diphosphooxymethyl)pyrimidine contacts are provided by residues 38-42 and asparagine 73; that span reads QFREK. Mg(2+) is bound by residues aspartate 74 and aspartate 93. Serine 111 serves as a coordination point for 4-amino-2-methyl-5-(diphosphooxymethyl)pyrimidine. 137–139 contributes to the 2-[(2R,5Z)-2-carboxy-4-methylthiazol-5(2H)-ylidene]ethyl phosphate binding site; that stretch reads TLS. Lysine 140 lines the 4-amino-2-methyl-5-(diphosphooxymethyl)pyrimidine pocket. Residues glycine 169 and 189 to 190 each bind 2-[(2R,5Z)-2-carboxy-4-methylthiazol-5(2H)-ylidene]ethyl phosphate; that span reads IS.

This sequence belongs to the thiamine-phosphate synthase family. Mg(2+) serves as cofactor.

It carries out the reaction 2-[(2R,5Z)-2-carboxy-4-methylthiazol-5(2H)-ylidene]ethyl phosphate + 4-amino-2-methyl-5-(diphosphooxymethyl)pyrimidine + 2 H(+) = thiamine phosphate + CO2 + diphosphate. It catalyses the reaction 2-(2-carboxy-4-methylthiazol-5-yl)ethyl phosphate + 4-amino-2-methyl-5-(diphosphooxymethyl)pyrimidine + 2 H(+) = thiamine phosphate + CO2 + diphosphate. The catalysed reaction is 4-methyl-5-(2-phosphooxyethyl)-thiazole + 4-amino-2-methyl-5-(diphosphooxymethyl)pyrimidine + H(+) = thiamine phosphate + diphosphate. The protein operates within cofactor biosynthesis; thiamine diphosphate biosynthesis; thiamine phosphate from 4-amino-2-methyl-5-diphosphomethylpyrimidine and 4-methyl-5-(2-phosphoethyl)-thiazole: step 1/1. In terms of biological role, condenses 4-methyl-5-(beta-hydroxyethyl)thiazole monophosphate (THZ-P) and 2-methyl-4-amino-5-hydroxymethyl pyrimidine pyrophosphate (HMP-PP) to form thiamine monophosphate (TMP). This is Thiamine-phosphate synthase from Streptococcus suis (strain 98HAH33).